We begin with the raw amino-acid sequence, 327 residues long: MPADQRPLAIALMGPTASGKTALALEAAERWNGEIVSVDSALVYRGLEIGAAKPDAAMRAAVPHHLLDLRDPWQVYSAAEFAGDARQAIAQIVARGKLPILAGGTGLYFRALLEGLSHLPEADRAARASIAAEAAQIGWAGLHSELARVDPVAAARIHATDPQRIQRALEVYRISGRPISYWQALPPGLRLPVRVLKVVLAPRERAVLHGRIERRLDAMLAQGFLAEVEQVRALPQMRAVAVPLDLPAVRAVGYRQAWEYLDGAGSLAEFRDKAIQATRQLAKRQLTWLRGELDARWFDPERDRHQLERALVGFLGDRSAVRQASGV.

14–21 (GPTASGKT) contacts ATP. Position 16-21 (16-21 (TASGKT)) interacts with substrate. 2 interaction with substrate tRNA regions span residues 39-42 (DSAL) and 163-167 (QRIQR).

It belongs to the IPP transferase family. In terms of assembly, monomer. Mg(2+) is required as a cofactor.

The enzyme catalyses adenosine(37) in tRNA + dimethylallyl diphosphate = N(6)-dimethylallyladenosine(37) in tRNA + diphosphate. Functionally, catalyzes the transfer of a dimethylallyl group onto the adenine at position 37 in tRNAs that read codons beginning with uridine, leading to the formation of N6-(dimethylallyl)adenosine (i(6)A). The sequence is that of tRNA dimethylallyltransferase from Xanthomonas oryzae pv. oryzae (strain KACC10331 / KXO85).